A 323-amino-acid chain; its full sequence is Phosphatidylethanolamine:ceramide ethanolaminephosphotransferase (323 aa).

Residues 1–26 are Cytoplasmic-facing; that stretch reads MAVPPVEMYSGSFWNRMRKPLPLRTQ. Residues 27–47 traverse the membrane as a helical segment; it reads VIRFTVVFVIVSFILAVALQI. Over 48 to 73 the chain is Extracellular; it reads THERMPDPKVTKPLPDLGFEVLHKYP. Residues 74–94 traverse the membrane as a helical segment; sequence FLFSVADCCIGFLNILSVFTA. Over 95 to 147 the chain is Cytoplasmic; it reads FKLYLLHRHCVGSGEPELPCNIPGVSRFFLSVWLCKENCRIELRNVHTIAWIR. The helical transmembrane segment at 148 to 168 threads the bilayer; the sequence is FITSYALLLLSRSVIMVVTSL. Residues 169 to 211 are Extracellular-facing; the sequence is PNPDDLCQDPPKIENRVKDVILTVLTAGAGSIHCGDLMYSGHT. Residue His210 is part of the active site. Residues 212–232 traverse the membrane as a helical segment; it reads VILTLHLMFHWIYGAMVHWSF. Residue Arg233 is a topological domain, cytoplasmic. A helical membrane pass occupies residues 234 to 254; it reads PVVTVVAIFGYYCIVASRFHY. Residues His253 and Asp257 contribute to the active site. The Extracellular segment spans residues 255–257; sequence TDD. A helical transmembrane segment spans residues 258-278; that stretch reads VLVAIYLTIATFIAVGHNADG. Topologically, residues 279 to 323 are cytoplasmic; the sequence is APWQLQLFIRWLPCCGANSREVTEDGVPVAIVIKNEEMMNFEGKS.

It belongs to the sphingomyelin synthase family.

It is found in the membrane. Bidirectional lipid ethanolaminephosphotransferase capable of converting phosphatidylethanolamine (PE) and ceramide to ethanolamine-phosphorylceramide (EPC) and diacylglycerol (DAG) and vice versa. Direction is dependent on the relative concentrations of DAG and ceramide as phosphoethanolamine acceptors. Does not function strictly as a SM synthase. Essential for viability of the pathogenic bloodstream stage of this human protozoan parasite and, consequently, can be considered as potential drug target. The chain is Phosphatidylethanolamine:ceramide ethanolaminephosphotransferase from Trypanosoma brucei brucei (strain 927/4 GUTat10.1).